We begin with the raw amino-acid sequence, 206 residues long: Urease accessory protein UreG (206 aa).

Residue 14-21 participates in GTP binding; the sequence is GPVGSGKT.

The protein belongs to the SIMIBI class G3E GTPase family. UreG subfamily. Homodimer. UreD, UreF and UreG form a complex that acts as a GTP-hydrolysis-dependent molecular chaperone, activating the urease apoprotein by helping to assemble the nickel containing metallocenter of UreC. The UreE protein probably delivers the nickel.

It localises to the cytoplasm. Functionally, facilitates the functional incorporation of the urease nickel metallocenter. This process requires GTP hydrolysis, probably effectuated by UreG. This chain is Urease accessory protein UreG, found in Brucella anthropi (strain ATCC 49188 / DSM 6882 / CCUG 24695 / JCM 21032 / LMG 3331 / NBRC 15819 / NCTC 12168 / Alc 37) (Ochrobactrum anthropi).